The primary structure comprises 277 residues: Energy-coupling factor transporter ATP-binding protein EcfA1 (277 aa).

The region spanning 5 to 240 (LEVENLVFKY…SEDMVEIGLD (236 aa)) is the ABC transporter domain. 40-47 (GQNGSGKS) contacts ATP. The active-site Proton acceptor is the glutamate 166.

This sequence belongs to the ABC transporter superfamily. Energy-coupling factor EcfA family. As to quaternary structure, forms a stable energy-coupling factor (ECF) transporter complex composed of 2 membrane-embedded substrate-binding proteins (S component), 2 ATP-binding proteins (A component) and 2 transmembrane proteins (T component). In L.lactis forms a stable complex with EcfA' and EcfT and substrate-binding components. In E.coli forms a stable complex with EcfA', EcfT and individually with 3 tested substrate-binding components (BioY, NiaX and ThiT) with a stoichiometry of 1.1:1:1. The core ECF complex interacts with a number of substrate-specific binding components, including BioY, BioY2, HmpT, NiaX, PanT, QueT, RibU and ThiT.

Its subcellular location is the cell membrane. Functionally, ATP-binding (A) component of a common energy-coupling factor (ECF) ABC-transporter complex. Unlike classic ABC transporters this ECF transporter provides the energy necessary to transport a number of different substrates. In this organism these probably include biotin, thiamine precursor, niacin, pantothenic acid, queuosine precursor, riboflavin and thiamine. Uptake of niacin or riboflavin into proteosomes containing EcfA1A2T and Niax or RibU has been demonstrated. Uptake requires hydrolyzable Mg-ATP and is substrate-specific; NiaX-containing proteosomes did not transport riboflavin. This Lactococcus lactis subsp. cremoris (strain MG1363) protein is Energy-coupling factor transporter ATP-binding protein EcfA1.